Here is a 441-residue protein sequence, read N- to C-terminus: Peroxisomal multifunctional enzyme A (441 aa).

Positions 1-302 are 3-hydroxyacyl-CoA dehydrogenase; that stretch reads MALNFKDKVV…VNSKPADGES (302 aa). NAD(+)-binding positions include 11–35, Ile19, Asp38, 73–74, and Asn97; these read IVTGAGGGIGKVYALEFAKRGAKVV and SV. Ser149 is a binding site for substrate. The active-site Proton acceptor is Tyr162. NAD(+) is bound by residues 162 to 166 and 194 to 197; these read YGSMK and AASR. An SCP2 domain is found at 331–440; it reads ASKIFTTIQG…KLGALMQGSK (110 aa). Gln412 serves as a coordination point for substrate.

The protein belongs to the short-chain dehydrogenases/reductases (SDR) family.

The protein localises to the peroxisome. It carries out the reaction a (3S)-3-hydroxyacyl-CoA + NAD(+) = a 3-oxoacyl-CoA + NADH + H(+). The protein operates within lipid metabolism; fatty acid beta-oxidation. In terms of biological role, enzyme acting on the peroxisomal beta-oxidation pathway for fatty acids. Protects the cells from the increase of the harmful xenobiotic fatty acids incorporated from their diets and optimizes cellular lipid composition for proper development. In Dictyostelium discoideum (Social amoeba), this protein is Peroxisomal multifunctional enzyme A (mfeA).